Here is a 463-residue protein sequence, read N- to C-terminus: MFS-type transporter criB (463 aa).

11 helical membrane passes run 5–27 (LVLS…SGIM), 46–66 (MVGT…LTAG), 83–103 (VFVV…MLLI), 106–126 (LVTG…QAEI), 141–161 (LMLA…SFVN), 168–188 (MPLA…YFLP), 256–276 (LFLG…VINY), 293–313 (IFLS…ALFF), 323–343 (LMMA…LTAA), 355–375 (VAMI…LSWV), and 402–422 (FYFL…FLYP).

This sequence belongs to the major facilitator superfamily. Sugar transporter (TC 2.A.1.1) family.

It is found in the membrane. MFS-type transporter; part of the gene cluster that mediates the biosynthesis of echinulin family alkaloid. This chain is MFS-type transporter criB, found in Aspergillus cristatus (Chinese Fuzhuan brick tea-fermentation fungus).